Reading from the N-terminus, the 122-residue chain is uncharacterized protein (122 aa).

The protein to B.subtilis YpdA.

This is an uncharacterized protein from Bacillus licheniformis.